The following is a 149-amino-acid chain: Large ribosomal subunit protein uL15 (149 aa).

A disordered region spans residues 1–58 (MKLHNLRPAKGGEVKARKRVGRGYGSGLGHNAGRGRDGQNSRSGGGVRPGFEGGQMPL). 2 stretches are compositionally biased toward gly residues: residues 22-32 (RGYGSGLGHNA) and 43-53 (SGGGVRPGFEG).

Belongs to the universal ribosomal protein uL15 family. As to quaternary structure, part of the 50S ribosomal subunit.

Binds to the 23S rRNA. This is Large ribosomal subunit protein uL15 from Finegoldia magna (strain ATCC 29328 / DSM 20472 / WAL 2508) (Peptostreptococcus magnus).